The following is a 253-amino-acid chain: Triosephosphate isomerase (253 aa).

Residue 9 to 11 participates in substrate binding; sequence NWK. His-97 (electrophile) is an active-site residue. The active-site Proton acceptor is Glu-169. Residues Gly-175, Ser-215, and 236-237 contribute to the substrate site; that span reads GG.

Belongs to the triosephosphate isomerase family. As to quaternary structure, homodimer.

It localises to the cytoplasm. It catalyses the reaction D-glyceraldehyde 3-phosphate = dihydroxyacetone phosphate. Its pathway is carbohydrate biosynthesis; gluconeogenesis. It participates in carbohydrate degradation; glycolysis; D-glyceraldehyde 3-phosphate from glycerone phosphate: step 1/1. Involved in the gluconeogenesis. Catalyzes stereospecifically the conversion of dihydroxyacetone phosphate (DHAP) to D-glyceraldehyde-3-phosphate (G3P). The polypeptide is Triosephosphate isomerase (Staphylococcus haemolyticus (strain JCSC1435)).